Reading from the N-terminus, the 763-residue chain is Thiamine biosynthesis multifunctional protein ThiED (763 aa).

The thiamine-phosphate synthase stretch occupies residues 1–210 (MTDFSLYLVT…ANPAAAATRL (210 aa)). 4-amino-2-methyl-5-(diphosphooxymethyl)pyrimidine is bound by residues 37-41 (QLRDK) and Asn-69. Asp-70 and Asp-88 together coordinate Mg(2+). Position 107 (Ser-107) interacts with 4-amino-2-methyl-5-(diphosphooxymethyl)pyrimidine. 140-142 (TAT) provides a ligand contact to 2-[(2R,5Z)-2-carboxy-4-methylthiazol-5(2H)-ylidene]ethyl phosphate. Residue Lys-143 coordinates 4-amino-2-methyl-5-(diphosphooxymethyl)pyrimidine. Residues Gly-174 and 194–195 (VS) contribute to the 2-[(2R,5Z)-2-carboxy-4-methylthiazol-5(2H)-ylidene]ethyl phosphate site. Positions 245–500 (LSIAGTDPTG…GTGNGPVDHG (256 aa)) are hydroxymethylpyrimidine/phosphomethylpyrimidine kinase. Residue Gln-282 participates in 4-amino-5-hydroxymethyl-2-methylpyrimidine binding. A thiaminase-2 region spans residues 550 to 763 (FTRALWEASG…RHGWTMVGSS (214 aa)).

The protein in the N-terminal section; belongs to the thiamine-phosphate synthase family. It in the central section; belongs to the ThiD family. In the C-terminal section; belongs to the thiaminase-2 family. The cofactor is Mg(2+).

It catalyses the reaction 2-[(2R,5Z)-2-carboxy-4-methylthiazol-5(2H)-ylidene]ethyl phosphate + 4-amino-2-methyl-5-(diphosphooxymethyl)pyrimidine + 2 H(+) = thiamine phosphate + CO2 + diphosphate. It carries out the reaction 2-(2-carboxy-4-methylthiazol-5-yl)ethyl phosphate + 4-amino-2-methyl-5-(diphosphooxymethyl)pyrimidine + 2 H(+) = thiamine phosphate + CO2 + diphosphate. The catalysed reaction is 4-methyl-5-(2-phosphooxyethyl)-thiazole + 4-amino-2-methyl-5-(diphosphooxymethyl)pyrimidine + H(+) = thiamine phosphate + diphosphate. The enzyme catalyses 4-amino-5-hydroxymethyl-2-methylpyrimidine + ATP = 4-amino-2-methyl-5-(phosphooxymethyl)pyrimidine + ADP + H(+). It catalyses the reaction 4-amino-2-methyl-5-(phosphooxymethyl)pyrimidine + ATP = 4-amino-2-methyl-5-(diphosphooxymethyl)pyrimidine + ADP. Its pathway is cofactor biosynthesis; thiamine diphosphate biosynthesis; 4-amino-2-methyl-5-diphosphomethylpyrimidine from 5-amino-1-(5-phospho-D-ribosyl)imidazole: step 3/3. It participates in cofactor biosynthesis; thiamine diphosphate biosynthesis; thiamine phosphate from 4-amino-2-methyl-5-diphosphomethylpyrimidine and 4-methyl-5-(2-phosphoethyl)-thiazole: step 1/1. In terms of biological role, condenses 4-methyl-5-(beta-hydroxyethyl)thiazole monophosphate (THZ-P) and 2-methyl-4-amino-5-hydroxymethyl pyrimidine pyrophosphate (HMP-PP) to form thiamine monophosphate (TMP). Functionally, catalyzes the phosphorylation of hydroxymethylpyrimidine phosphate (HMP-P) to HMP-PP, and of HMP to HMP-P. The chain is Thiamine biosynthesis multifunctional protein ThiED (theD) from Corynebacterium glutamicum (strain ATCC 13032 / DSM 20300 / JCM 1318 / BCRC 11384 / CCUG 27702 / LMG 3730 / NBRC 12168 / NCIMB 10025 / NRRL B-2784 / 534).